A 601-amino-acid polypeptide reads, in one-letter code: ATP-dependent lipid A-core flippase (601 aa).

Positions Leu-28–Arg-328 constitute an ABC transmembrane type-1 domain. 6 helical membrane passes run Cys-32–Ile-52, Val-81–Phe-101, Ala-160–Tyr-180, Trp-183–Val-203, Ala-267–Ala-287, and Asp-296–Ile-316. In terms of domain architecture, ABC transporter spans Leu-360–Met-597. Residue Gly-394 to Ser-401 participates in ATP binding.

The protein belongs to the ABC transporter superfamily. Lipid exporter (TC 3.A.1.106) family. As to quaternary structure, homodimer.

It is found in the cell inner membrane. The enzyme catalyses ATP + H2O + lipid A-core oligosaccharideSide 1 = ADP + phosphate + lipid A-core oligosaccharideSide 2.. Its function is as follows. Involved in lipopolysaccharide (LPS) biosynthesis. Translocates lipid A-core from the inner to the outer leaflet of the inner membrane. Transmembrane domains (TMD) form a pore in the inner membrane and the ATP-binding domain (NBD) is responsible for energy generation. The protein is ATP-dependent lipid A-core flippase of Shewanella sp. (strain MR-4).